Reading from the N-terminus, the 227-residue chain is MAKISKRMKSVKGLVDKQKVYALDEAIKLAKETSTTKFDSTVELSFNLNIDPRKADQQIRGALVLPAGTGKTQKVLVLTNTKVKEAQDAGADFVGGEELITKIQKENWFEFDVIVATPEMMAKLGAIGKVLGPKGLMPNPKTGTVTMDVAKAIDEIKKGKIEFRADKEGNIHTIIGKASFTAEQLKENFTTILNEMKRVKPQTVKGDYIINITISTTMGPGIKVEIN.

It belongs to the universal ribosomal protein uL1 family. In terms of assembly, part of the 50S ribosomal subunit.

Its function is as follows. Binds directly to 23S rRNA. The L1 stalk is quite mobile in the ribosome, and is involved in E site tRNA release. Protein L1 is also a translational repressor protein, it controls the translation of the L11 operon by binding to its mRNA. The polypeptide is Large ribosomal subunit protein uL1 (Mesoplasma florum (strain ATCC 33453 / NBRC 100688 / NCTC 11704 / L1) (Acholeplasma florum)).